Here is a 146-residue protein sequence, read N- to C-terminus: [Ribosomal protein bS18]-alanine N-acetyltransferase (146 aa).

The N-acetyltransferase domain occupies 2–146 (SIISQIEACD…ENAVVMACYL (145 aa)). 69 to 71 (IAI) contacts acetyl-CoA. The active-site Proton acceptor is the glutamate 103. Asparagine 108 contacts acetyl-CoA. Tyrosine 114 acts as the Proton donor in catalysis.

This sequence belongs to the acetyltransferase family. RimI subfamily.

It is found in the cytoplasm. It carries out the reaction N-terminal L-alanyl-[ribosomal protein bS18] + acetyl-CoA = N-terminal N(alpha)-acetyl-L-alanyl-[ribosomal protein bS18] + CoA + H(+). In terms of biological role, acetylates the N-terminal alanine of ribosomal protein bS18. The chain is [Ribosomal protein bS18]-alanine N-acetyltransferase from Haemophilus influenzae (strain ATCC 51907 / DSM 11121 / KW20 / Rd).